We begin with the raw amino-acid sequence, 445 residues long: Transcription activator AFTR-1 (445 aa).

Residues 17–44 (CDFCTQSKLRCNKNKPSCRRCTLQQQPC) constitute a DNA-binding region (zn(2)-C6 fungal-type). Positions 50–89 (RRTGRPPKHPRKANDCQEANGQHGDQDPVTSTPGGSYQQQ) are disordered. Residues 51-60 (RTGRPPKHPR) are compositionally biased toward basic residues. Residues 77 to 89 (PVTSTPGGSYQQQ) are compositionally biased toward polar residues.

Its subcellular location is the nucleus. Its function is as follows. Transcription factor that regulates the expression of the gene clusters that mediate the biosynthesis of the host-selective toxins (HSTs) AF-toxins responsible for Alternaria black spot of strawberry disease by the strawberry pathotype. On cellular level, AF-toxins affect plasma membrane of susceptible cells and cause a sudden increase in loss of K(+) after a few minutes of toxin treatment. The sequence is that of Transcription activator AFTR-1 from Alternaria alternata (Alternaria rot fungus).